Reading from the N-terminus, the 827-residue chain is Xanthomonalisin (827 aa).

An N-terminal signal peptide occupies residues 1-23 (MKIEKTALTVAIALAMSSLSAHA). Positions 24–237 (EDAWVSTHTQ…GPNVGTQAAA (214 aa)) are cleaved as a propeptide — removed in mature form. The region spanning 241 to 625 (AHHPQDFAAI…GKLNTYAQAN (385 aa)) is the Peptidase S53 domain. Catalysis depends on charge relay system residues E312, D316, and S544. Ca(2+)-binding residues include D585, V586, A601, G603, and D605. The PKD domain maps to 635–722 (TNAPPVANFS…VTVSSSGGTG (88 aa)). Positions 636–827 (NAPPVANFSV…GVSLKATWTN (192 aa)) are cleaved as a propeptide — removed in mature form.

The cofactor is Ca(2+). Post-translationally, autocatalytically processed.

It localises to the secreted. It carries out the reaction Cleavage of casein.. With respect to regulation, inhibited by 1,2-epoxy-3-(p-nitrophenoxy)propane (EPNP), but not by pepstatin, pepstatin Ac (S-PI) and diazoacetyl-DL-norleucine methyl ester (DAN). Not inhibited by metal ions. Functionally, pepstatin-insensitive serine-carboxyl proteinase. Shows activity on acid-denatured hemoglobin and on casein. The polypeptide is Xanthomonalisin (Xanthomonas sp. (strain T-22)).